Here is a 102-residue protein sequence, read N- to C-terminus: uncharacterized protein (102 aa).

This is an uncharacterized protein from Schizosaccharomyces pombe (strain 972 / ATCC 24843) (Fission yeast).